The primary structure comprises 226 residues: Ribonuclease 3 (226 aa).

The region spanning 6-128 (INRLQRKLGY…LIGGIFLDSD (123 aa)) is the RNase III domain. A Mg(2+)-binding site is contributed by glutamate 41. Residue aspartate 45 is part of the active site. Mg(2+) contacts are provided by aspartate 114 and glutamate 117. Glutamate 117 is a catalytic residue. The 71-residue stretch at 155–225 (DPKTRLQEFL…AEQALKKLEL (71 aa)) folds into the DRBM domain.

Belongs to the ribonuclease III family. In terms of assembly, homodimer. It depends on Mg(2+) as a cofactor.

It localises to the cytoplasm. The enzyme catalyses Endonucleolytic cleavage to 5'-phosphomonoester.. Digests double-stranded RNA. Involved in the processing of primary rRNA transcript to yield the immediate precursors to the large and small rRNAs (23S and 16S). Processes some mRNAs, and tRNAs when they are encoded in the rRNA operon. Processes pre-crRNA and tracrRNA of type II CRISPR loci if present in the organism. This is Ribonuclease 3 from Pectobacterium carotovorum subsp. carotovorum (strain PC1).